A 319-amino-acid chain; its full sequence is Lipoyl synthase (319 aa).

Residues 1–12 show a composition bias toward polar residues; sequence MVTIVDTLSNTP. The tract at residues 1-32 is disordered; sequence MVTIVDTLSNTPLRPRHPEKANRPDSISPAKP. Positions 61, 66, 72, 87, 91, 94, and 300 each coordinate [4Fe-4S] cluster. Residues 73-289 form the Radical SAM core domain; that stretch reads WDKKHATFMI…ETVAYTKGFL (217 aa).

This sequence belongs to the radical SAM superfamily. Lipoyl synthase family. Requires [4Fe-4S] cluster as cofactor.

The protein resides in the cytoplasm. The catalysed reaction is [[Fe-S] cluster scaffold protein carrying a second [4Fe-4S](2+) cluster] + N(6)-octanoyl-L-lysyl-[protein] + 2 oxidized [2Fe-2S]-[ferredoxin] + 2 S-adenosyl-L-methionine + 4 H(+) = [[Fe-S] cluster scaffold protein] + N(6)-[(R)-dihydrolipoyl]-L-lysyl-[protein] + 4 Fe(3+) + 2 hydrogen sulfide + 2 5'-deoxyadenosine + 2 L-methionine + 2 reduced [2Fe-2S]-[ferredoxin]. The protein operates within protein modification; protein lipoylation via endogenous pathway; protein N(6)-(lipoyl)lysine from octanoyl-[acyl-carrier-protein]: step 2/2. Catalyzes the radical-mediated insertion of two sulfur atoms into the C-6 and C-8 positions of the octanoyl moiety bound to the lipoyl domains of lipoate-dependent enzymes, thereby converting the octanoylated domains into lipoylated derivatives. The protein is Lipoyl synthase of Bradyrhizobium sp. (strain BTAi1 / ATCC BAA-1182).